Consider the following 40-residue polypeptide: Photosystem II reaction center protein J (40 aa).

Residues 8–28 form a helical membrane-spanning segment; it reads IPLWLIGTVTGIIVIGLLGIF.

It belongs to the PsbJ family. As to quaternary structure, PSII is composed of 1 copy each of membrane proteins PsbA, PsbB, PsbC, PsbD, PsbE, PsbF, PsbH, PsbI, PsbJ, PsbK, PsbL, PsbM, PsbT, PsbX, PsbY, PsbZ, Psb30/Ycf12, at least 3 peripheral proteins of the oxygen-evolving complex and a large number of cofactors. It forms dimeric complexes.

It is found in the plastid. The protein localises to the chloroplast thylakoid membrane. Functionally, one of the components of the core complex of photosystem II (PSII). PSII is a light-driven water:plastoquinone oxidoreductase that uses light energy to abstract electrons from H(2)O, generating O(2) and a proton gradient subsequently used for ATP formation. It consists of a core antenna complex that captures photons, and an electron transfer chain that converts photonic excitation into a charge separation. This Pinus koraiensis (Korean pine) protein is Photosystem II reaction center protein J.